Reading from the N-terminus, the 127-residue chain is Glycine cleavage system H protein (127 aa).

The Lipoyl-binding domain occupies 22–103; the sequence is EAYIGITDFA…AFANWIIKVE (82 aa). Residue lysine 63 is modified to N6-lipoyllysine.

Belongs to the GcvH family. The glycine cleavage system is composed of four proteins: P, T, L and H. (R)-lipoate serves as cofactor.

The glycine cleavage system catalyzes the degradation of glycine. The H protein shuttles the methylamine group of glycine from the P protein to the T protein. This chain is Glycine cleavage system H protein, found in Alkaliphilus oremlandii (strain OhILAs) (Clostridium oremlandii (strain OhILAs)).